Here is a 136-residue protein sequence, read N- to C-terminus: UPF0102 protein BBta_0181 (136 aa).

The protein belongs to the UPF0102 family.

This Bradyrhizobium sp. (strain BTAi1 / ATCC BAA-1182) protein is UPF0102 protein BBta_0181.